Consider the following 751-residue polypeptide: Centrosomal protein of 68 kDa (751 aa).

Composition is skewed to basic and acidic residues over residues 1–17 and 86–96; these read MALG…EDTK and ASREPVAERSE. The tract at residues 1–253 is disordered; the sequence is MALGEEKAEA…PQPVFSGGDA (253 aa). 2 stretches are compositionally biased toward polar residues: residues 131–144 and 163–175; these read LPQT…TTIC and APSS…SQWK. Residues 176 to 200 are compositionally biased toward low complexity; it reads SMPSPGSAAPQPSSCSVSASSTGSS. The residue at position 326 (S326) is a Phosphoserine. Positions 339 to 348 are enriched in polar residues; the sequence is STLKSPTNVF. Disordered stretches follow at residues 339–474, 511–545, and 590–611; these read STLK…ESDD, SPLE…SGDP, and RLDR…KGGE. Basic and acidic residues-rich tracts occupy residues 399–416 and 433–450; these read GSRD…RGAK and RTRD…EKRT. Residues 451–461 show a composition bias toward polar residues; it reads SQSARRPTCTE. Residues S466 and S472 each carry the phosphoserine modification. Over residues 520–537 the composition is skewed to low complexity; it reads GPASLPSSSSQSQLPPGA.

Interacts with CNTLN; the interaction recruits CEP68 to the centrosome. Interacts with the SCF(FBXW11) complex which contains SKP1, CUL1 and FBXW11; the interaction is probably mediated by FBXW11 and the complex also contains CDK5RAP2 and PCNT. Also interacts with F-box protein BTRC. Interacts with serine/threonine-protein kinase PLK1; the interaction leads to phosphorylation of CEP68 and its subsequent degradation. Interacts with NEK2; the interaction leads to phosphorylation of CEP68. Phosphorylation by PLK1 is required for binding to BTRC in prometaphase. Phosphorylated directly or indirectly by NEK2. NEK2-mediated phosphorylation promotes CEP68 dissociation from the centrosome and its degradation at the onset of mitosis. Post-translationally, ubiquitinated and targeted for proteasomal degradation in early mitosis by the SCF(BTRC) and/or SCF(FBXW11) E3 ubiquitin-protein ligase complexes. Degradation is complete by prometaphase and is required for removal of CDK5RAP2 from the peripheral pericentriolar material and subsequent centriole separation.

The protein resides in the cytoplasm. The protein localises to the cytoskeleton. Its subcellular location is the microtubule organizing center. It is found in the centrosome. Functionally, involved in maintenance of centrosome cohesion, probably as part of a linker structure which prevents centrosome splitting. Required for localization of CDK5RAP2 to the centrosome during interphase. Contributes to CROCC/rootletin filament formation. This chain is Centrosomal protein of 68 kDa (CEP68), found in Pongo abelii (Sumatran orangutan).